Here is a 289-residue protein sequence, read N- to C-terminus: Ribosomal protein L11 methyltransferase (289 aa).

4 residues coordinate S-adenosyl-L-methionine: Thr-142, Gly-163, Asp-185, and Asn-226.

The protein belongs to the methyltransferase superfamily. PrmA family.

The protein localises to the cytoplasm. The enzyme catalyses L-lysyl-[protein] + 3 S-adenosyl-L-methionine = N(6),N(6),N(6)-trimethyl-L-lysyl-[protein] + 3 S-adenosyl-L-homocysteine + 3 H(+). Its function is as follows. Methylates ribosomal protein L11. The protein is Ribosomal protein L11 methyltransferase of Legionella pneumophila (strain Lens).